We begin with the raw amino-acid sequence, 97 residues long: U6-theraphotoxin-Hhn1a 1 (97 aa).

The first 33 residues, 1–33, serve as a signal peptide directing secretion; sequence MLIKQFSRRSKNMKVQILLAFAALFVLAVGSYA. Positions 34 to 61 are excised as a propeptide; sequence SESKKLDLRDALFSAMFSADYQLNPQER. 3 disulfide bridges follow: Cys-63–Cys-77, Cys-70–Cys-82, and Cys-76–Cys-89.

It belongs to the neurotoxin 10 (Hwtx-1) family. 12 (Hntx-12) subfamily. As to expression, expressed by the venom gland.

It localises to the secreted. In terms of biological role, ion channel inhibitor. The sequence is that of U6-theraphotoxin-Hhn1a 1 from Cyriopagopus hainanus (Chinese bird spider).